The primary structure comprises 235 residues: Ubiquinone biosynthesis O-methyltransferase (235 aa).

Residues R39, G59, D80, and M124 each coordinate S-adenosyl-L-methionine.

It belongs to the methyltransferase superfamily. UbiG/COQ3 family.

The enzyme catalyses a 3-demethylubiquinol + S-adenosyl-L-methionine = a ubiquinol + S-adenosyl-L-homocysteine + H(+). The catalysed reaction is a 3-(all-trans-polyprenyl)benzene-1,2-diol + S-adenosyl-L-methionine = a 2-methoxy-6-(all-trans-polyprenyl)phenol + S-adenosyl-L-homocysteine + H(+). The protein operates within cofactor biosynthesis; ubiquinone biosynthesis. Its function is as follows. O-methyltransferase that catalyzes the 2 O-methylation steps in the ubiquinone biosynthetic pathway. The sequence is that of Ubiquinone biosynthesis O-methyltransferase from Vibrio vulnificus (strain CMCP6).